The chain runs to 516 residues: MPRRKQARRTTVRDIRTILRLTHEEGLSVREIAERLKIGKSSVSTYLLRSREAGLSWPLPIGADEDAKLERRLFGRAGRPPRDLSEPDWALVVRELKRKGVTLTLLWQEYRASHPDGYGFTWFCEQVAAFRQRTSVAFRNRHAAGAVMQTDYAGPTVPVIDPATGVIHPAQIFVAVLGASNLTFAHASFSQQLPDWIDGQVRALTFYGGVTKAIVCDNLKSGVAKALWFEPTLTATFAAMAEHYDTTILPTRSRKPRDKGRVEGAVLIVERWILARLRNRTFFSLAALNTAIAELLEDLNNRTMRHVGKSRRELFEEIERPALKPLPAIPFEYAEWKSAKVHPDYHVEVDKTFYSVPHRLIGCTLQVRLTHRVVEIFHDHQRVASHVRRSQRSGHVTVNDHMPKAHQRYANTTPANLIGRATQIGPNAAILVERMMRDRPHPEQGYRSAMGILSLAPRYGSQRLEAACERALTINAITYSSVASILKSGLDRERPQAEHAAPTPAHTNIRGRSYYQ.

The 82-residue stretch at 15-96 (IRTILRLTHE…PDWALVVREL (82 aa)) folds into the HTH IS408-type domain. One can recognise an Integrase catalytic domain in the interval 138 to 319 (FRNRHAAGAV…SRRELFEEIE (182 aa)). The segment at 493–516 (ERPQAEHAAPTPAHTNIRGRSYYQ) is disordered.

Belongs to the transposase IS21/IS408/IS1162 family.

In Sinorhizobium fredii (strain NBRC 101917 / NGR234), this protein is Putative transposase y4bL/y4kJ/y4tB.